The following is a 434-amino-acid chain: Glutamate-1-semialdehyde 2,1-aminomutase 1 (434 aa).

Residue lysine 270 is modified to N6-(pyridoxal phosphate)lysine.

This sequence belongs to the class-III pyridoxal-phosphate-dependent aminotransferase family. HemL subfamily. Homodimer. The cofactor is pyridoxal 5'-phosphate.

Its subcellular location is the cytoplasm. The catalysed reaction is (S)-4-amino-5-oxopentanoate = 5-aminolevulinate. It participates in porphyrin-containing compound metabolism; protoporphyrin-IX biosynthesis; 5-aminolevulinate from L-glutamyl-tRNA(Glu): step 2/2. In Bacillus anthracis (strain CDC 684 / NRRL 3495), this protein is Glutamate-1-semialdehyde 2,1-aminomutase 1.